The primary structure comprises 404 residues: Homoserine O-succinyltransferase (404 aa).

The span at 1 to 25 (MTDIQADPAVTAADAAQADTSSPTA) shows a compositional bias: low complexity. The segment at 1–30 (MTDIQADPAVTAADAAQADTSSPTAHQGKP) is disordered. Positions 75-384 (NAVLICHALN…HGHDAFLLED (310 aa)) constitute an AB hydrolase-1 domain. The Nucleophile role is filled by Ser-179. Position 249 (Arg-249) interacts with substrate. Catalysis depends on residues Asp-344 and His-377. Asp-378 serves as a coordination point for substrate.

Belongs to the AB hydrolase superfamily. MetX family. As to quaternary structure, homodimer.

It is found in the cytoplasm. The enzyme catalyses L-homoserine + succinyl-CoA = O-succinyl-L-homoserine + CoA. It participates in amino-acid biosynthesis; L-methionine biosynthesis via de novo pathway; O-succinyl-L-homoserine from L-homoserine: step 1/1. Its function is as follows. Transfers a succinyl group from succinyl-CoA to L-homoserine, forming succinyl-L-homoserine. This is Homoserine O-succinyltransferase from Ralstonia pickettii (strain 12J).